Consider the following 232-residue polypeptide: UPF0177 protein in abiGi 5'region (232 aa).

The next 6 membrane-spanning stretches (helical) occupy residues 12-32, 47-67, 86-106, 124-144, 165-185, and 206-226; these read YLSL…ILAY, VVAT…GILI, LLFL…SYTY, SIQI…APIF, IVSC…LIVY, and ILVH…LQVI.

Belongs to the UPF0177 family.

The protein localises to the cell membrane. Its function is as follows. The function of this protein is currently unknown, but it has been shown that it is not necessary for phage resistance. In Lactococcus lactis subsp. cremoris (Streptococcus cremoris), this protein is UPF0177 protein in abiGi 5'region.